Consider the following 303-residue polypeptide: 2-dehydropantoate 2-reductase (303 aa).

NADP(+) is bound by residues 7-12 (GCGALG), asparagine 98, and alanine 122. Asparagine 98 contacts substrate. The active-site Proton donor is the lysine 176. Residues asparagine 180, asparagine 184, asparagine 194, and serine 244 each coordinate substrate. Glutamate 256 provides a ligand contact to NADP(+).

Belongs to the ketopantoate reductase family.

The protein localises to the cytoplasm. It carries out the reaction (R)-pantoate + NADP(+) = 2-dehydropantoate + NADPH + H(+). The protein operates within cofactor biosynthesis; (R)-pantothenate biosynthesis; (R)-pantoate from 3-methyl-2-oxobutanoate: step 2/2. Its function is as follows. Catalyzes the NADPH-dependent reduction of ketopantoate into pantoic acid. This chain is 2-dehydropantoate 2-reductase (panE), found in Yersinia pestis.